We begin with the raw amino-acid sequence, 448 residues long: Asparagine--tRNA ligase (448 aa).

Belongs to the class-II aminoacyl-tRNA synthetase family. As to quaternary structure, homodimer.

The protein resides in the cytoplasm. It catalyses the reaction tRNA(Asn) + L-asparagine + ATP = L-asparaginyl-tRNA(Asn) + AMP + diphosphate + H(+). This is Asparagine--tRNA ligase from Streptococcus suis (strain 98HAH33).